The primary structure comprises 278 residues: Digeranylgeranylglyceryl phosphate synthase (278 aa).

8 consecutive transmembrane segments (helical) span residues 17 to 37, 40 to 60, 91 to 111, 129 to 149, 153 to 173, 204 to 224, 226 to 246, and 257 to 277; these read MASF…LEMV, LIFA…LNDI, LLVF…LMAV, IIGN…GGIA, IDVT…REII, LLLV…FFGI, YLIS…PLLI, and SRNI…GSFF.

This sequence belongs to the UbiA prenyltransferase family. DGGGP synthase subfamily. Requires Mg(2+) as cofactor.

The protein localises to the cell membrane. The enzyme catalyses sn-3-O-(geranylgeranyl)glycerol 1-phosphate + (2E,6E,10E)-geranylgeranyl diphosphate = 2,3-bis-O-(geranylgeranyl)-sn-glycerol 1-phosphate + diphosphate. Its pathway is membrane lipid metabolism; glycerophospholipid metabolism. Its function is as follows. Prenyltransferase that catalyzes the transfer of the geranylgeranyl moiety of geranylgeranyl diphosphate (GGPP) to the C2 hydroxyl of (S)-3-O-geranylgeranylglyceryl phosphate (GGGP). This reaction is the second ether-bond-formation step in the biosynthesis of archaeal membrane lipids. The protein is Digeranylgeranylglyceryl phosphate synthase of Methanococcus maripaludis (strain C5 / ATCC BAA-1333).